A 213-amino-acid chain; its full sequence is Insulin-like peptide INSL6 (213 aa).

Residues 1-20 (MPRLLRLSLLWLGLLLVRFS) form the signal peptide. 3 disulfides stabilise this stretch: Cys33/Cys179, Cys45/Cys192, and Cys178/Cys183. Positions 55 to 168 (FEEETPFSRL…SNLFWGHHPQ (114 aa)) are cleaved as a propeptide — connecting peptide. Positions 201–213 (LKEKRSSLVTKIY) are excised as a propeptide.

It belongs to the insulin family. Testis specific.

The protein localises to the secreted. Functionally, may have a role in sperm development and fertilization. The polypeptide is Insulin-like peptide INSL6 (INSL6) (Homo sapiens (Human)).